The chain runs to 248 residues: Metallo-beta-lactamase type 2 (248 aa).

Positions 1–21 (MKRLKGLLVLALGFTGLQVFG) are cleaved as a signal peptide. Residues H97, H99, D101, H160, and C179 each contribute to the Zn(2+) site. Substrate is bound at residue K182. Position 221 (H221) interacts with Zn(2+).

It belongs to the metallo-beta-lactamase superfamily. Class-B beta-lactamase family. In terms of assembly, monomer. The cofactor is Zn(2+).

Its subcellular location is the periplasm. It carries out the reaction a beta-lactam + H2O = a substituted beta-amino acid. Confers resistance to the different beta-lactams antibiotics (penicillin, cephalosporin and carbapenem) via the hydrolysis of the beta-lactam ring. This chain is Metallo-beta-lactamase type 2 (blaB6), found in Elizabethkingia meningoseptica (Chryseobacterium meningosepticum).